Reading from the N-terminus, the 372-residue chain is Alanine dehydrogenase 1 (372 aa).

The active site involves His94. 170–200 (TYVIFGGGVAATNAANVALGLNAKVIIIELN) provides a ligand contact to NAD(+).

This sequence belongs to the AlaDH/PNT family.

It carries out the reaction L-alanine + NAD(+) + H2O = pyruvate + NH4(+) + NADH + H(+). It participates in amino-acid degradation; L-alanine degradation via dehydrogenase pathway; NH(3) and pyruvate from L-alanine: step 1/1. In terms of biological role, may play a role in cell wall synthesis as L-alanine is an important constituent of the peptidoglycan layer. This Staphylococcus aureus (strain MSSA476) protein is Alanine dehydrogenase 1 (ald1).